Here is an 844-residue protein sequence, read N- to C-terminus: Penicillin-binding protein 1B (844 aa).

Residues 1-10 (MAGNDREPIG) show a composition bias toward basic and acidic residues. Residues 1 to 60 (MAGNDREPIGRKGKPTRPVKQKVSRRRYEDDDDYDDYDDYEDEEPMPRKGKGKGKGRKPR) form a disordered region. Residues 1–63 (MAGNDREPIG…GKGRKPRGKR (63 aa)) are Cytoplasmic-facing. The segment covering 11 to 25 (RKGKPTRPVKQKVSR) has biased composition (basic residues). Residues 30–44 (DDDDYDDYDDYEDEE) show a composition bias toward acidic residues. Residues 48 to 60 (RKGKGKGKGRKPR) are compositionally biased toward basic residues. Residues 64 to 87 (GWLWLLLKLAIVFAVLIAIYGVYL) form a helical; Signal-anchor for type II membrane protein membrane-spanning segment. Positions 88-250 (DQKIRSRIDG…DGISLYSIGR (163 aa)) are membrane association. The Periplasmic segment spans residues 88–844 (DQKIRSRIDG…GWIKDMFGSN (757 aa)). The interval 109 to 200 (RMVNLEPDMT…QFGFFRLDPR (92 aa)) is uvrB domain 2 homolog. A transglycosylase region spans residues 195–367 (FRLDPRLITM…SIYNPWRNPK (173 aa)). The active-site Proton donor; for transglycosylase activity is glutamate 233. The tract at residues 444-736 (SVAQDAAEKA…NNQPTKLYGA (293 aa)) is transpeptidase. Serine 510 acts as the Acyl-ester intermediate; for transpeptidase activity in catalysis. Residues 793–825 (LCQQSEMQQQPSGNPFDQSSQPQQQPQQQPAQQ) are compositionally biased toward low complexity. The interval 793 to 835 (LCQQSEMQQQPSGNPFDQSSQPQQQPQQQPAQQEQKDSDGVAG) is disordered.

It in the N-terminal section; belongs to the glycosyltransferase 51 family. In the C-terminal section; belongs to the transpeptidase family. Forms a trimeric complex with MipA and MltA. Has also been shown to exist as monomer or homodimer; homodimer of Alpha and Gamma isozymes can be found. Interacts with UvrA, FtsL and FtsN.

It is found in the cell inner membrane. The catalysed reaction is [GlcNAc-(1-&gt;4)-Mur2Ac(oyl-L-Ala-gamma-D-Glu-L-Lys-D-Ala-D-Ala)](n)-di-trans,octa-cis-undecaprenyl diphosphate + beta-D-GlcNAc-(1-&gt;4)-Mur2Ac(oyl-L-Ala-gamma-D-Glu-L-Lys-D-Ala-D-Ala)-di-trans,octa-cis-undecaprenyl diphosphate = [GlcNAc-(1-&gt;4)-Mur2Ac(oyl-L-Ala-gamma-D-Glu-L-Lys-D-Ala-D-Ala)](n+1)-di-trans,octa-cis-undecaprenyl diphosphate + di-trans,octa-cis-undecaprenyl diphosphate + H(+). The enzyme catalyses Preferential cleavage: (Ac)2-L-Lys-D-Ala-|-D-Ala. Also transpeptidation of peptidyl-alanyl moieties that are N-acyl substituents of D-alanine.. The protein operates within cell wall biogenesis; peptidoglycan biosynthesis. In terms of biological role, cell wall formation. Synthesis of cross-linked peptidoglycan from the lipid intermediates. The enzyme has a penicillin-insensitive transglycosylase N-terminal domain (formation of linear glycan strands) and a penicillin-sensitive transpeptidase C-terminal domain (cross-linking of the peptide subunits). The protein is Penicillin-binding protein 1B (mrcB) of Escherichia coli (strain K12).